Here is a 79-residue protein sequence, read N- to C-terminus: Putative defensin-like protein 80 (79 aa).

Residues 1–26 form the signal peptide; that stretch reads MDVQRSSYIFIALSIIAMFLITGVKP. 4 cysteine pairs are disulfide-bonded: cysteine 32–cysteine 65, cysteine 36–cysteine 58, cysteine 44–cysteine 63, and cysteine 48–cysteine 64.

It belongs to the DEFL family.

It is found in the secreted. The protein is Putative defensin-like protein 80 (LCR81) of Arabidopsis thaliana (Mouse-ear cress).